Reading from the N-terminus, the 139-residue chain is Putative nickel-responsive regulator (139 aa).

Ni(2+) is bound by residues His79, His90, His92, and Cys98.

This sequence belongs to the transcriptional regulatory CopG/NikR family. It depends on Ni(2+) as a cofactor.

In terms of biological role, transcriptional regulator. This is Putative nickel-responsive regulator from Geotalea uraniireducens (strain Rf4) (Geobacter uraniireducens).